The sequence spans 413 residues: PCI domain-containing protein 2 homolog (413 aa).

The 182-residue stretch at 222–403 folds into the PCI domain; it reads VAYNYFLGRK…QKLVISKTNA (182 aa).

Belongs to the CSN12 family.

The protein is PCI domain-containing protein 2 homolog of Caenorhabditis briggsae.